The primary structure comprises 255 residues: Ciliogenesis and planar polarity effector 2 (255 aa).

The tract at residues 52–255 is small GTPase-like; sequence PADIASYKLF…VIAGLVGGAD (204 aa). GTP contacts are provided by residues 64–71 and 177–180; these read GRSGAGKT and TKLD.

It belongs to the small GTPase superfamily. Rab family.

It is found in the cytoplasm. Its subcellular location is the cytoskeleton. It localises to the cilium basal body. Its function is as follows. Potential effector of the planar cell polarity signaling pathway. Plays a role in targeted membrane trafficking most probably at the level of vesicle fusion with membranes. Involved in cilium biogenesis by regulating the transport of cargo proteins to the basal body and to the apical tips of cilia. More generally involved in exocytosis in secretory cells. The protein is Ciliogenesis and planar polarity effector 2 (cplane2) of Xenopus tropicalis (Western clawed frog).